Consider the following 469-residue polypeptide: Ectonucleoside triphosphate diphosphohydrolase 5 (469 aa).

A signal peptide spans 1-24 (MATPWGAVFFLLMIACAGSTVFYR). Glutamate 172 functions as the Proton acceptor in the catalytic mechanism. The N-linked (GlcNAc...) asparagine glycan is linked to asparagine 232. 2 disulfide bridges follow: cysteine 272-cysteine 303 and cysteine 363-cysteine 377.

Belongs to the GDA1/CD39 NTPase family. Monomer; active form. Homodimer; disulfide-linked. Homodimers are enzymatically inactive. Requires Ca(2+) as cofactor. The cofactor is Mg(2+). N-glycosylated; high-mannose type. In terms of tissue distribution, expressed in fetal cells and most adult tissues.

It is found in the endoplasmic reticulum. The protein resides in the secreted. It carries out the reaction a ribonucleoside 5'-diphosphate + H2O = a ribonucleoside 5'-phosphate + phosphate + H(+). It catalyses the reaction GDP + H2O = GMP + phosphate + H(+). The enzyme catalyses UDP + H2O = UMP + phosphate + H(+). The catalysed reaction is IDP + H2O = IMP + phosphate + H(+). It carries out the reaction CDP + H2O = CMP + phosphate + H(+). It catalyses the reaction ADP + H2O = AMP + phosphate + H(+). It participates in protein modification; protein glycosylation. Its function is as follows. Hydrolyzes nucleoside diphosphates with a preference for GDP, IDP and UDP compared to ADP and CDP. In the lumen of the endoplasmic reticulum, hydrolyzes UDP that acts as an end-product feedback inhibitor of the UDP-Glc:glycoprotein glucosyltransferases. UMP can be transported back by an UDP-sugar antiporter to the cytosol where it is consumed to regenerate UDP-glucose. Therefore, it positively regulates protein reglucosylation by clearing UDP from the ER lumen and by promoting the regeneration of UDP-glucose. Protein reglucosylation is essential to proper glycoprotein folding and quality control in the ER. The polypeptide is Ectonucleoside triphosphate diphosphohydrolase 5 (ENTPD5) (Mesocricetus auratus (Golden hamster)).